The chain runs to 185 residues: Ribosome-recycling factor (185 aa).

Belongs to the RRF family.

It is found in the cytoplasm. Responsible for the release of ribosomes from messenger RNA at the termination of protein biosynthesis. May increase the efficiency of translation by recycling ribosomes from one round of translation to another. The sequence is that of Ribosome-recycling factor from Bacillus cereus (strain G9842).